The following is a 135-amino-acid chain: MATFHFDLVSPEQVAFSGEVDQVDIPGAEGDFGVLAGHAPVVAVIRPGILTVTAGGAQQKIVVLGGIAEVSEKGLTVLADVATAVADLDMQDFAATIATMEQQLPGKVGDVLDRSIERLDHYKSIQHQISTTAMH.

The protein belongs to the ATPase epsilon chain family. F-type ATPases have 2 components, CF(1) - the catalytic core - and CF(0) - the membrane proton channel. CF(1) has five subunits: alpha(3), beta(3), gamma(1), delta(1), epsilon(1). CF(0) has three main subunits: a, b and c.

The protein resides in the cell inner membrane. Functionally, produces ATP from ADP in the presence of a proton gradient across the membrane. The protein is ATP synthase epsilon chain of Rhodopseudomonas palustris (strain BisB5).